The chain runs to 103 residues: uncharacterized protein (103 aa).

This is an uncharacterized protein from Homo sapiens (Human).